Consider the following 390-residue polypeptide: Aspergillopepsin-1 (390 aa).

Residues 1-19 form the signal peptide; the sequence is MVNTSLLAALTAYAVAVSA. The propeptide at 20–67 is activation peptide; sequence APTAPQVKGFSVNQVAVPKGVYRHPAAQLAKAYGKYHATVPTQVAAAA. Residue Thr-70 is glycosylated (O-linked (Man...) threonine). The Peptidase A1 domain maps to 84-387; the sequence is YITQVTVGDD…DASGPRLGFA (304 aa). Residues Asp-100 and Asp-281 contribute to the active site.

It belongs to the peptidase A1 family.

It is found in the secreted. The enzyme catalyses Hydrolysis of proteins with broad specificity. Generally favors hydrophobic residues in P1 and P1', but also accepts Lys in P1, which leads to activation of trypsinogen. Does not clot milk.. With respect to regulation, inhibited by the microbial peptide pepstatin. Its function is as follows. Secreted aspartic endopeptidase that allows assimilation of proteinaceous substrates. The scissile peptide bond is attacked by a nucleophilic water molecule activated by two aspartic residues in the active site. Shows a broad primary substrate specificity. Favors hydrophobic residues at the P1 and P1' positions, but also accepts a lysine residue in the P1 position, leading to the activation of trypsinogen and chymotrypsinogen A. This Aspergillus oryzae (Yellow koji mold) protein is Aspergillopepsin-1 (pepA).